Here is a 208-residue protein sequence, read N- to C-terminus: Peptidyl-tRNA hydrolase 2 (208 aa).

Positions 32 to 45 (SNASSTKKSSATLL) are enriched in low complexity. Residues 32-81 (SNASSTKKSSATLLRSKEMKEGKLHNDTDEEESESEDESDEDEDIESTSL) are disordered. Positions 46 to 58 (RSKEMKEGKLHND) are enriched in basic and acidic residues. Acidic residues predominate over residues 59–77 (TDEEESESEDESDEDEDIE). K152 is covalently cross-linked (Glycyl lysine isopeptide (Lys-Gly) (interchain with G-Cter in ubiquitin)).

The protein belongs to the PTH2 family.

It localises to the cytoplasm. It carries out the reaction an N-acyl-L-alpha-aminoacyl-tRNA + H2O = an N-acyl-L-amino acid + a tRNA + H(+). Functionally, the natural substrate for this enzyme may be peptidyl-tRNAs which drop off the ribosome during protein synthesis. The chain is Peptidyl-tRNA hydrolase 2 from Saccharomyces cerevisiae (strain ATCC 204508 / S288c) (Baker's yeast).